Here is an 80-residue protein sequence, read N- to C-terminus: Defensin-like protein 204 (80 aa).

Residues 1–29 (MAKTFSSICFTTLLLVVLFISTEIPKSEA) form the signal peptide. Intrachain disulfides connect C43-C64, C48-C73, and C52-C75.

Belongs to the DEFL family.

Its subcellular location is the secreted. This is Defensin-like protein 204 from Arabidopsis thaliana (Mouse-ear cress).